The chain runs to 281 residues: Ribosomal RNA small subunit methyltransferase I (281 aa).

The protein belongs to the methyltransferase superfamily. RsmI family.

It localises to the cytoplasm. It catalyses the reaction cytidine(1402) in 16S rRNA + S-adenosyl-L-methionine = 2'-O-methylcytidine(1402) in 16S rRNA + S-adenosyl-L-homocysteine + H(+). Its function is as follows. Catalyzes the 2'-O-methylation of the ribose of cytidine 1402 (C1402) in 16S rRNA. This chain is Ribosomal RNA small subunit methyltransferase I, found in Erythrobacter litoralis (strain HTCC2594).